Here is a 475-residue protein sequence, read N- to C-terminus: Ankyrin repeat, SAM and basic leucine zipper domain-containing protein 1 (475 aa).

A disordered region spans residues Met-1 to Trp-25. A phosphoserine mark is found at Ser-17, Ser-18, and Ser-20. ANK repeat units follow at residues Glu-45 to Ser-74, Tyr-78 to Phe-107, Asp-110 to Val-144, Arg-148 to Thr-177, Asn-181 to Leu-210, and Asp-214 to Gly-243. Residues Ser-272–Gln-334 enclose the SAM domain.

As to quaternary structure, interacts with DDX4, PIWIL1, RANBP9 and TDRD1.

The protein localises to the cytoplasm. Plays a central role during spermatogenesis by repressing transposable elements and preventing their mobilization, which is essential for the germline integrity. Acts via the piRNA metabolic process, which mediates the repression of transposable elements during meiosis by forming complexes composed of piRNAs and Piwi proteins and governs the methylation and subsequent repression of transposons. Its association with pi-bodies suggests a participation in the primary piRNAs metabolic process. Required prior to the pachytene stage to facilitate the production of multiple types of piRNAs, including those associated with repeats involved in the regulation of retrotransposons. May act by mediating protein-protein interactions during germ cell maturation. The polypeptide is Ankyrin repeat, SAM and basic leucine zipper domain-containing protein 1 (ASZ1) (Papio anubis (Olive baboon)).